A 487-amino-acid polypeptide reads, in one-letter code: b(0,+)-type amino acid transporter 1 (487 aa).

Residues 1–20 form a disordered region; that stretch reads MEETSLRRRREDEKSTHSTE. The Cytoplasmic portion of the chain corresponds to 1-31; sequence MEETSLRRRREDEKSTHSTELKTTSLQKEVG. A Phosphoserine modification is found at Ser-18. The chain crosses the membrane as a helical span at residues 32–55; sequence LLSGICIIVGTIIGSGIFISPKSV. Residue 43–47 coordinates L-arginine; that stretch reads IIGSG. The Extracellular segment spans residues 56-62; it reads LANTESV. Residues 63 to 84 form a helical membrane-spanning segment; the sequence is GPCLIIWAACGILATLGALCFA. Over 85–110 the chain is Cytoplasmic; the sequence is ELGTMITKSGGEYPYLMEAFGPIPAY. Residues 111-137 form a helical membrane-spanning segment; it reads LFSWTSLIVMKPSSFAIICLSFSEYVC. At 138 to 147 the chain is on the extracellular side; sequence AAFYSGCKPP. The next 2 membrane-spanning stretches (helical) occupy residues 148–169 and 170–193; these read AVVV…NALS and VRLG…IIII. The Extracellular portion of the chain corresponds to 194-217; that stretch reads SGLVFLAQGNVKNFQNSFEGTQTS. Residues 218–238 form a helical membrane-spanning segment; the sequence is VGAISLAFYNGLWAYDGWNQL. Asp-233 serves as a coordination point for L-arginine. The Cytoplasmic segment spans residues 239-251; that stretch reads NYITEELRNPYRN. The helical transmembrane segment at 252 to 274 threads the bilayer; the sequence is LPMAIVIGIPLVTVCYILMNIAY. Residues 275–302 are Extracellular-facing; the sequence is FTVMTPTELLQSQAVAVTFGDRVLYPAS. A helical transmembrane segment spans residues 303 to 325; the sequence is WVVPLFVAFSTIGAANGTCFTAG. Over 326-351 the chain is Cytoplasmic; that stretch reads RLIYVAGREGHMLKVLSYISVKRLTP. Helical transmembrane passes span 352-370 and 371-391; these read APAL…IPGD and INSL…MTIL. The Cytoplasmic portion of the chain corresponds to 392-410; that stretch reads GLVVMRFTRKDLERPIKVP. Residues 411–431 traverse the membrane as a helical segment; it reads LFIPIIVILVSLFLILAPIIS. Residues 432-434 lie on the Extracellular side of the membrane; it reads EPA. A helical transmembrane segment spans residues 435–450; the sequence is WEYLYCVLFILSGLIF. Residues 451-487 lie on the Cytoplasmic side of the membrane; the sequence is YFLFVYYKFGWAQRISRPVTKHLQMLMEVVPPEKDPE.

This sequence belongs to the amino acid-polyamine-organocation (APC) superfamily. Disulfide-linked heterodimer composed of the catalytic light chain subunit SLC7A9 and the heavy chain subunit SLC3A1. The heterodimer is the minimal functional unit. Assembles in heterotetramers (dimers of heterodimers) and higher order oligomers; the oligomerization is mediated by SLC3A1 likely to prevent degradation and facilitate heteromer trafficking to the plasma membrane. Interacts with CAV1. As to expression, expressed in the brush border membrane in the kidney (at protein level).

The protein resides in the apical cell membrane. The enzyme catalyses L-leucine(out) + L-arginine(in) = L-leucine(in) + L-arginine(out). The catalysed reaction is L-histidine(out) + L-arginine(in) = L-histidine(in) + L-arginine(out). It catalyses the reaction L-arginine(in) + L-phenylalanine(out) = L-arginine(out) + L-phenylalanine(in). It carries out the reaction L-cysteine(out) + L-arginine(in) = L-cysteine(in) + L-arginine(out). The enzyme catalyses L-cystine(out) + L-arginine(in) = L-cystine(in) + L-arginine(out). The catalysed reaction is L-lysine(out) + L-arginine(in) = L-lysine(in) + L-arginine(out). Its function is as follows. Associates with SLC3A1 to form a functional transporter complex that mediates the electrogenic exchange between cationic amino acids and neutral amino acids, with a stoichiometry of 1:1. Has system b(0,+)-like activity with high affinity for extracellular cationic amino acids and L-cystine and lower affinity for intracellular neutral amino acids. Substrate exchange is driven by high concentration of intracellular neutral amino acids and the intracellular reduction of L-cystine to L-cysteine. Required for reabsorption of L-cystine and dibasic amino acids across the brush border membrane in renal proximal tubules. The sequence is that of b(0,+)-type amino acid transporter 1 (Slc7a9) from Mus musculus (Mouse).